Consider the following 381-residue polypeptide: Succinyl-diaminopimelate desuccinylase (381 aa).

His72 is a binding site for Zn(2+). Asp74 is an active-site residue. Asp105 contacts Zn(2+). Glu139 serves as the catalytic Proton acceptor. Residues Glu140, Glu168, and His354 each coordinate Zn(2+).

It belongs to the peptidase M20A family. DapE subfamily. In terms of assembly, homodimer. Requires Zn(2+) as cofactor. The cofactor is Co(2+).

It carries out the reaction N-succinyl-(2S,6S)-2,6-diaminopimelate + H2O = (2S,6S)-2,6-diaminopimelate + succinate. Its pathway is amino-acid biosynthesis; L-lysine biosynthesis via DAP pathway; LL-2,6-diaminopimelate from (S)-tetrahydrodipicolinate (succinylase route): step 3/3. Functionally, catalyzes the hydrolysis of N-succinyl-L,L-diaminopimelic acid (SDAP), forming succinate and LL-2,6-diaminopimelate (DAP), an intermediate involved in the bacterial biosynthesis of lysine and meso-diaminopimelic acid, an essential component of bacterial cell walls. The sequence is that of Succinyl-diaminopimelate desuccinylase from Shewanella sp. (strain MR-4).